A 263-amino-acid chain; its full sequence is Ribonuclease HII (263 aa).

The 219-residue stretch at Ala-39–Ala-257 folds into the RNase H type-2 domain. Positions 45, 46, and 157 each coordinate a divalent metal cation.

It belongs to the RNase HII family. It depends on Mn(2+) as a cofactor. Mg(2+) serves as cofactor.

It is found in the cytoplasm. It catalyses the reaction Endonucleolytic cleavage to 5'-phosphomonoester.. In terms of biological role, endonuclease that specifically degrades the RNA of RNA-DNA hybrids. The sequence is that of Ribonuclease HII from Oleidesulfovibrio alaskensis (strain ATCC BAA-1058 / DSM 17464 / G20) (Desulfovibrio alaskensis).